A 351-amino-acid polypeptide reads, in one-letter code: UDP-3-O-acylglucosamine N-acyltransferase (351 aa).

His-257 serves as the catalytic Proton acceptor.

This sequence belongs to the transferase hexapeptide repeat family. LpxD subfamily. As to quaternary structure, homotrimer.

It carries out the reaction a UDP-3-O-[(3R)-3-hydroxyacyl]-alpha-D-glucosamine + a (3R)-hydroxyacyl-[ACP] = a UDP-2-N,3-O-bis[(3R)-3-hydroxyacyl]-alpha-D-glucosamine + holo-[ACP] + H(+). It participates in bacterial outer membrane biogenesis; LPS lipid A biosynthesis. Its function is as follows. Catalyzes the N-acylation of UDP-3-O-acylglucosamine using 3-hydroxyacyl-ACP as the acyl donor. Is involved in the biosynthesis of lipid A, a phosphorylated glycolipid that anchors the lipopolysaccharide to the outer membrane of the cell. This chain is UDP-3-O-acylglucosamine N-acyltransferase, found in Brucella abortus (strain S19).